The sequence spans 82 residues: Small ribosomal subunit protein uS17 (82 aa).

This sequence belongs to the universal ribosomal protein uS17 family. In terms of assembly, part of the 30S ribosomal subunit.

In terms of biological role, one of the primary rRNA binding proteins, it binds specifically to the 5'-end of 16S ribosomal RNA. The protein is Small ribosomal subunit protein uS17 of Rhodopseudomonas palustris (strain HaA2).